A 164-amino-acid polypeptide reads, in one-letter code: Small ribosomal subunit protein uS5 (164 aa).

Positions 10 to 73 (LEERVVAINR…EAAKKNLIEV (64 aa)) constitute an S5 DRBM domain.

The protein belongs to the universal ribosomal protein uS5 family. Part of the 30S ribosomal subunit. Contacts proteins S4 and S8.

In terms of biological role, with S4 and S12 plays an important role in translational accuracy. Located at the back of the 30S subunit body where it stabilizes the conformation of the head with respect to the body. This Streptococcus thermophilus (strain CNRZ 1066) protein is Small ribosomal subunit protein uS5.